The chain runs to 482 residues: MKFIIKLFPEITIKSQSVRLRFIKILTGNIRNVLKHYDETLAVVRHWDNIEVRAKDENQRLAIRDALTRIPGIHHILEVEDVPFTDMHDIFEKALVQYRDQLEGKTFCVRVKRRGKHDFSSIDVERYVGGGLNQHIESARVKLTNPEVTVHLEVEDDRLLLIKGRYEGIGGFPIGTQEDVLSLISGGFDSGVSSYMLMRRGCRVHYCFFNLGGAAHEIGVRQVAHYLWNRFGSSHRVRFVAINFEPVVGEILEKIDDGQMGVILKRMMVRAASKVAERYGVQALVTGEALGQVSSQTLTNLRLIDNVSDTLILRPLISYDKEHIINLARQIGTEDFARTMPEYCGVISKSPTVKAAKSKIEAEEEKFDFSILDKVVEEANNVDIREIAQQTEQEVVEVETVNGFGPNDVILDIRSIDEQEDKPLKVEGIDVVSLPFYKLSTKFGDLDQNRTWLLWCERGVMSRLQALYLREQGFNNVKVYRP.

The THUMP domain maps to 61 to 165; that stretch reads LAIRDALTRI…DDRLLLIKGR (105 aa). ATP contacts are provided by residues 183–184, Lys265, Gly287, and Gln296; that span reads LI. A disulfide bridge connects residues Cys344 and Cys456. Positions 404–482 constitute a Rhodanese domain; that stretch reads FGPNDVILDI…GFNNVKVYRP (79 aa). Residue Cys456 is the Cysteine persulfide intermediate of the active site.

The protein belongs to the ThiI family.

It localises to the cytoplasm. It catalyses the reaction [ThiI sulfur-carrier protein]-S-sulfanyl-L-cysteine + a uridine in tRNA + 2 reduced [2Fe-2S]-[ferredoxin] + ATP + H(+) = [ThiI sulfur-carrier protein]-L-cysteine + a 4-thiouridine in tRNA + 2 oxidized [2Fe-2S]-[ferredoxin] + AMP + diphosphate. The enzyme catalyses [ThiS sulfur-carrier protein]-C-terminal Gly-Gly-AMP + S-sulfanyl-L-cysteinyl-[cysteine desulfurase] + AH2 = [ThiS sulfur-carrier protein]-C-terminal-Gly-aminoethanethioate + L-cysteinyl-[cysteine desulfurase] + A + AMP + 2 H(+). The protein operates within cofactor biosynthesis; thiamine diphosphate biosynthesis. Its function is as follows. Catalyzes the ATP-dependent transfer of a sulfur to tRNA to produce 4-thiouridine in position 8 of tRNAs, which functions as a near-UV photosensor. Also catalyzes the transfer of sulfur to the sulfur carrier protein ThiS, forming ThiS-thiocarboxylate. This is a step in the synthesis of thiazole, in the thiamine biosynthesis pathway. The sulfur is donated as persulfide by IscS. The protein is tRNA sulfurtransferase of Escherichia coli O139:H28 (strain E24377A / ETEC).